A 367-amino-acid chain; its full sequence is 3-isopropylmalate dehydrogenase (367 aa).

75-88 (GPKWDGIERSKRPE) lines the NAD(+) pocket. 4 residues coordinate substrate: Arg95, Arg105, Arg133, and Asp230. Mg(2+) contacts are provided by Asp230, Asp254, and Asp258. 288-300 (GSAPDIAGQDIAN) contacts NAD(+).

It belongs to the isocitrate and isopropylmalate dehydrogenases family. LeuB type 1 subfamily. As to quaternary structure, homodimer. Mg(2+) serves as cofactor. Requires Mn(2+) as cofactor.

Its subcellular location is the cytoplasm. The catalysed reaction is (2R,3S)-3-isopropylmalate + NAD(+) = 4-methyl-2-oxopentanoate + CO2 + NADH. It participates in amino-acid biosynthesis; L-leucine biosynthesis; L-leucine from 3-methyl-2-oxobutanoate: step 3/4. Catalyzes the oxidation of 3-carboxy-2-hydroxy-4-methylpentanoate (3-isopropylmalate) to 3-carboxy-4-methyl-2-oxopentanoate. The product decarboxylates to 4-methyl-2 oxopentanoate. The chain is 3-isopropylmalate dehydrogenase from Psychrobacter cryohalolentis (strain ATCC BAA-1226 / DSM 17306 / VKM B-2378 / K5).